The primary structure comprises 145 residues: 6-pyruvoyl tetrahydrobiopterin synthase (145 aa).

Position 19 is a phosphoserine (Ser-19). His-24 contributes to the Zn(2+) binding site. A Phosphoserine modification is found at Ser-28. The active-site Proton acceptor is the Cys-43. The Zn(2+) site is built by His-49 and His-51. The active-site Charge relay system is the His-90. Residue Tyr-128 is modified to Phosphotyrosine. Residue Glu-134 is the Charge relay system of the active site.

Belongs to the PTPS family. Homohexamer formed of two homotrimers in a head to head fashion. Zn(2+) is required as a cofactor. Post-translationally, phosphorylation of Ser-19 is required for maximal enzyme activity.

The enzyme catalyses 7,8-dihydroneopterin 3'-triphosphate = 6-pyruvoyl-5,6,7,8-tetrahydropterin + triphosphate + H(+). It participates in cofactor biosynthesis; tetrahydrobiopterin biosynthesis; tetrahydrobiopterin from 7,8-dihydroneopterin triphosphate: step 1/3. In terms of biological role, involved in the biosynthesis of tetrahydrobiopterin, an essential cofactor of aromatic amino acid hydroxylases. Catalyzes the transformation of 7,8-dihydroneopterin triphosphate into 6-pyruvoyl tetrahydropterin. The protein is 6-pyruvoyl tetrahydrobiopterin synthase (PTS) of Pongo abelii (Sumatran orangutan).